We begin with the raw amino-acid sequence, 372 residues long: Ciliary neurotrophic factor receptor subunit alpha (372 aa).

Residues 1–22 form the signal peptide; sequence MAASVPWACCAVLAAAAAAVYT. Positions 27 to 104 constitute an Ig-like C2-type domain; it reads PQEAPHVQYE…WHLRHQVLLH (78 aa). An intrachain disulfide couples Cys-46 to Cys-89. 5 N-linked (GlcNAc...) asparagine glycosylation sites follow: Asn-60, Asn-70, Asn-142, Asn-190, and Asn-261. 2 consecutive Fibronectin type-III domains span residues 108 to 205 and 206 to 306; these read PPRE…VKPD and PPEN…TEEP. A WSXWS motif motif is present at residues 290–294; sequence WSDWS. Residues 301–339 are disordered; the sequence is PWTEEPRHLTTEAQAPETTTSTTSSLAPPPTTKICDPGE. Over residues 311 to 326 the composition is skewed to low complexity; sequence TEAQAPETTTSTTSSL. Ser-342 is lipidated: GPI-anchor amidated serine. A propeptide spans 343–372 (removed in mature form); sequence GGGPSIPFLTSVPVTLVLAAAAATANNLLI.

This sequence belongs to the type I cytokine receptor family. Type 3 subfamily. In terms of assembly, forms a heterotrimer with LIFR and IL6ST. Interacts with heterodimeric neurotropic cytokine composed of CLCF1/CLC and CRLF1/CLF-1. Either alone or in complex with the heterodimer CLCF1-CRLF1 interacts with SORL1; this interaction may promote internalization and lysosomal degradation. In terms of tissue distribution, nervous system.

It localises to the cell membrane. Binds to CNTF. The alpha subunit provides the receptor specificity. In Rattus norvegicus (Rat), this protein is Ciliary neurotrophic factor receptor subunit alpha (Cntfr).